Consider the following 590-residue polypeptide: Pentatricopeptide repeat-containing protein At1g63070, mitochondrial (590 aa).

The transit peptide at Met1–Phe34 directs the protein to the mitochondrion. 14 PPR repeats span residues Ser74–His108, Asn109–Pro143, Ser144–Pro178, Asp179–Pro213, Asp214–Ala248, Asp249–Pro283, Asp284–Pro318, Asp319–Phe353, Asp355–Gly389, Asn390–Pro424, Asp425–Leu459, Asp460–Pro494, Asn495–Pro529, and Asn530–Gly564.

This sequence belongs to the PPR family. P subfamily.

The protein resides in the mitochondrion. This chain is Pentatricopeptide repeat-containing protein At1g63070, mitochondrial, found in Arabidopsis thaliana (Mouse-ear cress).